We begin with the raw amino-acid sequence, 155 residues long: MSITAMDAKLQRILEESTCFGIGHDPNVKECKMCDVREQCKAKTQGMNVPTPTRKKPEDVAPAKEKPTTKKTTAKKSTAKEEKKETAPKAKETKAKPKSKPKKAKAPENPNLPNFKEMSFEELVELAKERNVEWKDYNSPNITRMRLIMALKASY.

Residues 41 to 114 form a disordered region; sequence KAKTQGMNVP…KAPENPNLPN (74 aa). Composition is skewed to basic and acidic residues over residues 55–68 and 78–95; these read KKPEDVAPAKEKPT and TAKEEKKETAPKAKETKA.

In terms of biological role, required for late gene transcription and DNA replication. This is Gene 27 protein (27) from Bacillus subtilis (Bacteriophage SP01).